A 494-amino-acid chain; its full sequence is Solute carrier family 2, facilitated glucose transporter member 3 (494 aa).

At 1 to 10 (MGTTKVTPYL) the chain is on the cytoplasmic side. The helical transmembrane segment at 11 to 32 (IFATSVAAIGSFQFGYNTGVIN) threads the bilayer. Over 33–64 (APEMIIRDFLNYTLDEKLDEPPSRLLLTNLWS) the chain is Extracellular. N43 carries N-linked (GlcNAc...) asparagine glycosylation. The chain crosses the membrane as a helical span at residues 65–84 (LSVAIFSVGGMIGSFSVGLF). At 85 to 89 (NRFGR) the chain is on the cytoplasmic side. A helical membrane pass occupies residues 90 to 110 (RNSMLIVNLLAVIGGCLMGFC). At 111-117 (KISESVE) the chain is on the extracellular side. The chain crosses the membrane as a helical span at residues 118–141 (MLILGRLVIGVFCGLCTGFVPMYI). Residues 142–152 (GEISPTALRGA) are Cytoplasmic-facing. The helical transmembrane segment at 153 to 173 (FGTLNQLGIVIGILVAQIFGL) threads the bilayer. A D-glucose-binding site is contributed by Q158. Residues 174-182 (EIILGSEVL) are Extracellular-facing. The helical transmembrane segment at 183-203 (WPVLLGFTIIPAILQSAALPF) threads the bilayer. At 204–268 (CPESPRFLLI…LFRAPSYRQP (65 aa)) the chain is on the cytoplasmic side. Position 231 is a phosphothreonine (T231). The helical transmembrane segment at 269–289 (IIISIVLQLSQQLSGINAVFY) threads the bilayer. The interval 276–278 (QLS) is important for selectivity against fructose. D-glucose is bound by residues 279–280 (QQ) and N285. The Extracellular segment spans residues 290-303 (YSTGIFKDAGVKEP). The helical transmembrane segment at 304–324 (IYATIGAGVVNTIFTIVSVFL) threads the bilayer. N314 serves as a coordination point for D-glucose. Residues 325 to 330 (VERAGR) are Cytoplasmic-facing. Residues 331 to 351 (RTLHLIGLGGMALCSVLMTVS) form a helical membrane-spanning segment. Residues 352–362 (LLLKDKYDTMS) lie on the Extracellular side of the membrane. Residues 363-388 (LVCIAAILIYVAFFEIGPGPIPWFIV) traverse the membrane as a helical segment. Positions 377 and 385 each coordinate D-glucose. Residues 389-398 (AELFSQGPRP) lie on the Cytoplasmic side of the membrane. The helical transmembrane segment at 399–419 (AAMAVAGCSNWTSNFLVGLLF) threads the bilayer. At 420–428 (PSAAYYLGA) the chain is on the extracellular side. A helical membrane pass occupies residues 429-449 (YVFVIFAVFLVAFFIFTFFKV). Topologically, residues 450–494 (PETRGRTFEDITRAFEGQAAEANKLGKGPTMEMNSIQPIETTTHV) are cytoplasmic. A Phosphoserine modification is found at S484. A Phosphothreonine modification is found at T491.

Belongs to the major facilitator superfamily. Sugar transporter (TC 2.A.1.1) family. Glucose transporter subfamily. In terms of assembly, interacts with SMIM43; the interaction may promote SLC2A3-mediated glucose transport to meet the energy needs of mesendoderm differentiation. As to expression, detected in stomach, placenta, lung and brain.

The protein resides in the cell membrane. Its subcellular location is the perikaryon. The protein localises to the cell projection. It catalyses the reaction D-glucose(out) = D-glucose(in). The enzyme catalyses D-galactose(in) = D-galactose(out). Its activity is regulated as follows. Deoxyglucose transport is inhibited by D-glucose, D-galactose and maltose. Galactose transport is inhibited by D-glucose and maltose. Its function is as follows. Facilitative glucose transporter. Can also mediate the uptake of various other monosaccharides across the cell membrane. Mediates the uptake of glucose, 2-deoxyglucose, galactose, mannose, xylose and fucose, and probably also dehydroascorbate. Does not mediate fructose transport. Required for mesendoderm differentiation. This is Solute carrier family 2, facilitated glucose transporter member 3 from Oryctolagus cuniculus (Rabbit).